Reading from the N-terminus, the 145-residue chain is MKTVALILASLALLACTAESGVDFDKTLTHPNGLVVERPVGFDARRSAEGFRFDEGGKLRNPRQLEVQRQDAPPPPDLASRRLGDGEARYKVEEDDGGSAGSEYRLWAAKPAGARWIVVSASEQSEDGEPTFALAWALLERARLQ.

The signal sequence occupies residues 1 to 15 (MKTVALILASLALLA). Cys-16 carries N-palmitoyl cysteine lipidation. Cys-16 carries S-diacylglycerol cysteine lipidation. Positions 53–85 (FDEGGKLRNPRQLEVQRQDAPPPPDLASRRLGD) are disordered. Glu-126 serves as a coordination point for Ca(2+).

In terms of assembly, forms a heterotetramer with Tse3 consisting of two Tse3 dimers and two Tsi3 dimers. Formation of the complex inactivates Tse3 enzymatic activity.

Functionally, immunity protein that plays a role in preventing early activation of toxin Tse3. Occupies Tse3 substrate binding site and prevents the substrate from entering. This Pseudomonas aeruginosa (strain ATCC 15692 / DSM 22644 / CIP 104116 / JCM 14847 / LMG 12228 / 1C / PRS 101 / PAO1) protein is Immune protein Tsi3.